We begin with the raw amino-acid sequence, 952 residues long: Chaperone protein ClpC2, chloroplastic (952 aa).

A chloroplast-targeting transit peptide spans 1–45; the sequence is MAWSIALLTPPFFGPGRHVQAKEYREPRGCVMKMSSLKAPVLRIQ. In terms of domain architecture, Clp R spans 115–257; sequence FERFTEKAIK…RTQVIRMVGE (143 aa). 2 repeat regions span residues 118–183 and 193–257; these read FTEK…IGRG and FTPR…MVGE. Residues 278-525 form an i region; it reads LEEYGTNLTK…RVRLRHAQLP (248 aa). 323 to 330 is a binding site for ATP; the sequence is GEPGVGKT. One can recognise a UVR domain in the interval 532 to 567; that stretch reads EKQLRQITKEKNEAVRSQDFEMAGSHRDREIELKAE. Residues 592-783 form an II region; the sequence is VTESDIQHIV…LLIMTSNVGS (192 aa). Residue 666–673 coordinates ATP; that stretch reads GPTGVGKS.

This sequence belongs to the ClpA/ClpB family. ClpC subfamily. Homodimer and homohexamer. Hexamerization upon addition of ATP. Interacts with CLPT1. Interacts with CLPS1. Stably associated with the import machinery. Interacts with CLPF. The cofactor is Mg(2+). As to expression, expressed at low levels in roots and inflorescences. Expressed at very low levels in rosette leaves. Expressed in photosynthetic green tissues with high levels in young, developing leaf tissues.

Its subcellular location is the plastid. The protein resides in the chloroplast stroma. It localises to the chloroplast membrane. The catalysed reaction is ATP + H2O = ADP + phosphate + H(+). Functionally, molecular chaperone. May act as a suppressor of FtsH-mediated thylakoid membrane biogenesis and may enhance photoinhibition. Seems not involved in chloroplastic protein import. Probable component of the TIC-associated stromal import motor involved in inner membrane translocation. Has an ATPase activity, but no ADPase activity. Interacts with transit peptides with a positional preference. Localization of the signal sequence at the N-terminal end of a protein seems mandatory for interaction to take place. The chain is Chaperone protein ClpC2, chloroplastic from Arabidopsis thaliana (Mouse-ear cress).